The chain runs to 123 residues: WAP four-disulfide core domain protein 2 (123 aa).

A signal peptide spans 1 to 26 (MPACRLGLLVASLLLGLLLGLPPVTG). WAP domains are found at residues 28–69 (GAEK…VTIC) and 72–122 (PNEK…VTPV). Cystine bridges form between Cys35–Cys61, Cys44–Cys65, Cys48–Cys60, Cys54–Cys69, Cys79–Cys109, Cys92–Cys113, Cys96–Cys108, and Cys102–Cys118.

Homotrimer; disulfide-linked. In terms of tissue distribution, detected in the distal parts of the epididymis.

Its subcellular location is the secreted. In terms of biological role, broad range protease inhibitor. The chain is WAP four-disulfide core domain protein 2 (WFDC2) from Sus scrofa (Pig).